The sequence spans 31 residues: Cyclotide vico-B (31 aa).

Residues 1 to 31 (GSIPCAESCVYIPCITGIAGCSCKNKVCYYN) constitute a cross-link (cyclopeptide (Gly-Asn)). 3 cysteine pairs are disulfide-bonded: C5–C21, C9–C23, and C14–C28.

The protein belongs to the cyclotide family. Bracelet subfamily. Post-translationally, this is a cyclic peptide.

Its function is as follows. Probably participates in a plant defense mechanism. The sequence is that of Cyclotide vico-B from Viola cotyledon (Violeta).